We begin with the raw amino-acid sequence, 458 residues long: Flavonol 3-O-glucosyltransferase UGT76E12 (458 aa).

His-25 (proton acceptor) is an active-site residue. His-25 serves as a coordination point for an anthocyanidin. Asp-118 functions as the Charge relay in the catalytic mechanism. The UDP-alpha-D-glucose site is built by Thr-140, Ala-339, Gln-341, His-356, Trp-359, Asn-360, Ser-361, and Glu-364. Gly-379 is an an anthocyanidin binding site. Residues Asp-380 and Gln-381 each coordinate UDP-alpha-D-glucose.

This sequence belongs to the UDP-glycosyltransferase family.

The enzyme catalyses a flavonol + UDP-alpha-D-glucose = a flavonol 3-O-beta-D-glucoside + UDP + H(+). It carries out the reaction a 7-O-hydroxy-flavonol + UDP-alpha-D-glucose = a flavonol 7-O-beta-D-glucoside + UDP + H(+). Possesses quercetin 3-O-glucosyltransferase and 7-O-glucosyltransferase activities in vitro. This is Flavonol 3-O-glucosyltransferase UGT76E12 from Arabidopsis thaliana (Mouse-ear cress).